We begin with the raw amino-acid sequence, 357 residues long: Cinnamyl alcohol dehydrogenase 1 (357 aa).

One can recognise an Enoyl reductase (ER) domain in the interval 20–348; the sequence is GILSPYTYTL…KNDVRYRFVV (329 aa). Zn(2+) is bound at residue cysteine 47. NADP(+) is bound at residue serine 49. Zn(2+)-binding residues include histidine 69, glutamate 70, cysteine 100, cysteine 103, cysteine 106, cysteine 114, and cysteine 163. NADP(+)-binding positions include threonine 167, 188–193, 211–216, threonine 251, glycine 275, and 298–300; these read GLGGVG, SSSDKK, and SFI.

The protein belongs to the zinc-containing alcohol dehydrogenase family. As to quaternary structure, homodimer. Zn(2+) is required as a cofactor. Accumulates mainly in the placenta of red fruits, and, to a lower extent, in green fruits placenta, pericarp and seeds.

The protein resides in the cytoplasm. The catalysed reaction is (E)-cinnamyl alcohol + NADP(+) = (E)-cinnamaldehyde + NADPH + H(+). It carries out the reaction (E)-coniferol + NADP(+) = (E)-coniferaldehyde + NADPH + H(+). It catalyses the reaction (E)-sinapyl alcohol + NADP(+) = (E)-sinapaldehyde + NADPH + H(+). The enzyme catalyses (E)-4-coumaroyl alcohol + NADP(+) = (E)-4-coumaraldehyde + NADPH + H(+). The catalysed reaction is (E)-caffeyl alcohol + NADP(+) = (E)-caffeyl aldehyde + NADPH + H(+). It carries out the reaction vanillin + NADPH + H(+) = 4-hydroxy-3-methoxy-benzenemethanol + NADP(+). Its pathway is aromatic compound metabolism; phenylpropanoid biosynthesis. Inhibited, in a concentration-dependent manner, by N-(O-hydroxyphenyl) sulfinamoyltertiobutyl acetate (OHPAS), a specific cinnamyl alcohol dehydrogenase (CAD) inhibitor, as well as by ethylenediaminetetraacetic acid (EDTA), a metalloenzyme inhibitor. Functionally, involved in the biosynthesis of capsinoids natural products (e.g. capsiate), non-pungent alkaloids synthesized from phenylpropanoid intermediates in the placental tissue of sweet chili pepper fruit acting as repellant on herbivorous mammals. Catalyzes the reduction of vanillin to generate vanillyl alcohol, a precursor of capsiate, a non-pungent component that accumulates mainly in the placenta of mature red fruits, but also in green fruits to lower levels. Involved in lignin biosynthesis. Catalyzes the final step specific for the production of lignin monomers. Mediates the conversion of cinnamaldehyde and coniferaldehyde to cinnamyl alcohol and coniferyl alcohol, respectively. Catalyzes the NADPH-dependent reduction of 5-hydroxyconiferaldehyde, sinapaldehyde, 4-coumaraldehyde and caffeyl aldehyde to their respective alcohols. The chain is Cinnamyl alcohol dehydrogenase 1 from Capsicum annuum (Capsicum pepper).